Reading from the N-terminus, the 307-residue chain is MSPFLSFSRATWSELRNSVPMTLSEEDLKALQGINENLTMQEAVEVYLPLSRLLNLYVQARQSRNSVLHQFLNNDEHAPPFVIGIAGSVAVGKSTTARVLCALLSRWENHPKVELVTTDGFLYPKKMLNQRGIMHKKGFPESYDMKKLVQFVSDVKAGKPELEVPVYSHITYDITEEVKRVDRPDVLIIEGLNVLQSGMDYPHDPHRVFVSDFLDFSIYVDAESNTIEQWYVERFLKFRKGAFTQPGSYFSHYTQLSEQQAIEKAQQIWRDINGINLTENILPTKERAQLILRKGQNHLVEEILLRK.

87–94 (GSVAVGKS) serves as a coordination point for ATP.

The protein belongs to the prokaryotic pantothenate kinase family.

The protein resides in the cytoplasm. It carries out the reaction (R)-pantothenate + ATP = (R)-4'-phosphopantothenate + ADP + H(+). Its pathway is cofactor biosynthesis; coenzyme A biosynthesis; CoA from (R)-pantothenate: step 1/5. The polypeptide is Pantothenate kinase (Vibrio vulnificus (strain YJ016)).